The sequence spans 912 residues: Ubiquitin carboxyl-terminal hydrolase 20 (912 aa).

The UBP-type zinc finger occupies 6 to 111 (DLCPHLDSIG…GPAPKFSEQD (106 aa)). Zn(2+) contacts are provided by cysteine 8, histidine 10, cysteine 30, cysteine 33, cysteine 43, cysteine 48, cysteine 53, histidine 60, histidine 64, histidine 70, cysteine 83, and cysteine 86. The segment at 101-120 (PGPAPKFSEQDSPPPSHPLK) is disordered. Phosphoserine occurs at positions 112, 132, and 134. Residues 145–683 (TGMKNLGNSC…EAYVLFYRKS (539 aa)) form the USP domain. Cysteine 154 (nucleophile) is an active-site residue. 2 disordered regions span residues 258 to 308 (LTEA…GSQA) and 322 to 415 (ISEK…ASPV). At threonine 259 the chain carries Phosphothreonine. Residues 260–280 (EARDSDSSDTDEKREGDRSPS) show a composition bias toward basic and acidic residues. Serine 306 is modified (phosphoserine). The span at 322 to 333 (ISEKERMKDRKF) shows a compositional bias: basic and acidic residues. The residue at position 369 (serine 369) is a Phosphoserine. Threonine 378 carries the post-translational modification Phosphothreonine. A phosphoserine mark is found at serine 408 and serine 413. Residue histidine 641 is the Proton acceptor of the active site. 2 consecutive DUSP domains span residues 685-778 (EEAV…LYVC) and 787-890 (ALAK…RQSV).

This sequence belongs to the peptidase C19 family. USP20/USP33 subfamily. Interacts with VHL, leading to its ubiquitination and subsequent degradation. Interacts with CCP110. Interacts with DIO2. Interacts with HIF1A. Interacts with ADRB2. Interacts with USP18. In terms of processing, ubiquitinated via a VHL-dependent pathway for proteasomal degradation.

The protein localises to the cytoplasm. It is found in the endoplasmic reticulum. Its subcellular location is the perinuclear region. The protein resides in the cytoskeleton. It localises to the microtubule organizing center. The protein localises to the centrosome. It carries out the reaction Thiol-dependent hydrolysis of ester, thioester, amide, peptide and isopeptide bonds formed by the C-terminal Gly of ubiquitin (a 76-residue protein attached to proteins as an intracellular targeting signal).. Functionally, deubiquitinating enzyme that plays a role in many cellular processes including autophagy, cellular antiviral response or membrane protein biogenesis. Attenuates TLR4-mediated NF-kappa-B signaling by cooperating with beta-arrestin-2/ARRB2 and inhibiting TRAF6 autoubiquitination. Promotes cellular antiviral responses by deconjugating 'Lys-33' and 'Lys-48'-linked ubiquitination of STING1 leading to its stabilization. Plays an essential role in autophagy induction by regulating the ULK1 stability through deubiquitination of ULK1. Acts as a positive regulator for NF-kappa-B activation by TNF-alpha through deubiquitinating 'Lys-48'-linked polyubiquitination of SQSTM1, leading to its increased stability. Acts as a regulator of G-protein coupled receptor (GPCR) signaling by mediating the deubiquitination beta-2 adrenergic receptor (ADRB2). Plays a central role in ADRB2 recycling and resensitization after prolonged agonist stimulation by constitutively binding ADRB2, mediating deubiquitination of ADRB2 and inhibiting lysosomal trafficking of ADRB2. Upon dissociation, it is probably transferred to the translocated beta-arrestins, possibly leading to beta-arrestins deubiquitination and disengagement from ADRB2. This suggests the existence of a dynamic exchange between the ADRB2 and beta-arrestins. Deubiquitinates DIO2, thereby regulating thyroid hormone regulation. Deubiquitinates HIF1A, leading to stabilize HIF1A and enhance HIF1A-mediated activity. Deubiquitinates MCL1, a pivotal member of the anti-apoptotic Bcl-2 protein family to regulate its stability. Within the endoplasmic reticulum, participates with USP33 in the rescue of post-translationally targeted membrane proteins that are inappropriately ubiquitinated by the cytosolic protein quality control in the cytosol. In Bos taurus (Bovine), this protein is Ubiquitin carboxyl-terminal hydrolase 20 (USP20).